Consider the following 107-residue polypeptide: UPF0102 protein CTN_0433 (107 aa).

It belongs to the UPF0102 family.

In Thermotoga neapolitana (strain ATCC 49049 / DSM 4359 / NBRC 107923 / NS-E), this protein is UPF0102 protein CTN_0433.